The following is a 211-amino-acid chain: Ubiquitin-conjugating enzyme E2 S-C (211 aa).

The UBC core domain maps to 11–157 (HIIRRVYKEV…AKLMTEIHAQ (147 aa)). Cys-95 acts as the Glycyl thioester intermediate in catalysis. The disordered stretch occupies residues 158-211 (GSTLRGKDPTDPCSSASATVVSGDGPMAKKHAGDRDKKLAAKKKTDKKRALRRL). Over residues 197–211 (AAKKKTDKKRALRRL) the composition is skewed to basic residues.

The protein belongs to the ubiquitin-conjugating enzyme family.

It carries out the reaction S-ubiquitinyl-[E1 ubiquitin-activating enzyme]-L-cysteine + [E2 ubiquitin-conjugating enzyme]-L-cysteine = [E1 ubiquitin-activating enzyme]-L-cysteine + S-ubiquitinyl-[E2 ubiquitin-conjugating enzyme]-L-cysteine.. It participates in protein modification; protein ubiquitination. Catalyzes the covalent attachment of ubiquitin to other proteins. Acts as an essential factor of the anaphase promoting complex/cyclosome (APC/C), a cell cycle-regulated ubiquitin ligase that controls progression through mitosis. Acts by specifically elongating 'Lys-11'-linked polyubiquitin chains initiated by the E2 enzyme ube2c/ubch10 on APC/C substrates, enhancing the degradation of APC/C substrates by the proteasome and promoting mitotic exit. The chain is Ubiquitin-conjugating enzyme E2 S-C (ube2s-c) from Xenopus laevis (African clawed frog).